A 183-amino-acid chain; its full sequence is UPF0316 protein GTNG_0803 (183 aa).

Transmembrane regions (helical) follow at residues 5-25 (IVLVLALQLVYVPILTLRTIF), 33-53 (LAAFMGFLEALIYVFGLSIVF), and 59-79 (YIVMIVYAAGFGARGFLLEDI).

Belongs to the UPF0316 family.

It localises to the cell membrane. The protein is UPF0316 protein GTNG_0803 of Geobacillus thermodenitrificans (strain NG80-2).